The sequence spans 243 residues: DNA repair protein RecO (243 aa).

The protein belongs to the RecO family.

Functionally, involved in DNA repair and RecF pathway recombination. The polypeptide is DNA repair protein RecO (Thermobifida fusca (strain YX)).